The following is a 765-amino-acid chain: NADPH oxidase 5 (765 aa).

An N-terminal lobe of N-terminal regulatory EF domain region spans residues 1–77; that stretch reads MNTSGDPAQT…LFDSDRSGTI (77 aa). The tract at residues 1–161 is N-terminal regulatory EF domain; that stretch reads MNTSGDPAQT…SCLRESAISL (161 aa). Topologically, residues 1–238 are cytoplasmic; it reads MNTSGDPAQT…RAYWHNHRSQ (238 aa). 2 consecutive EF-hand domains span residues 26-56 and 57-92; these read RWLRWVTQQFKTIAGEDGEISLQEFKAALHV and KESFFAERFFALFDSDRSGTITLQELQEALTLLIHG. 9 residues coordinate Ca(2+): Asp-42, Glu-44, Glu-49, Asp-70, Asp-72, Ser-74, Thr-76, Glu-81, and Asp-106. The C-terminal lobe of N-terminal regulatory EF domain stretch occupies residues 78–161; sequence TLQELQEALT…SCLRESAISL (84 aa). One can recognise an EF-hand 3; atypical; contains an insert of 28 residues domain in the interval 93–156; the sequence is SPMDKLKFLF…RTVLQSCLRE (64 aa). Ile-107 bears the S-nitrosocysteine mark. Ca(2+) is bound by residues Asp-108, Ser-138, Ser-140, Glu-145, Asp-178, Asp-180, Asn-182, and Glu-189. The disordered stretch occupies residues 122 to 141; that stretch reads GAGAGPHWASSPLGTGSGSI. The EF-hand 4 domain maps to 165-200; it reads KLDQLTLALFESADADGNGAITFEELRDELQRFPGV. The chain crosses the membrane as a helical span at residues 239–259; that stretch reads LFCLATYAGLHVLLFGLAASA. Ala-246 is subject to S-nitrosocysteine. The Extracellular portion of the chain corresponds to 260–266; it reads HRDLGAS. The helical transmembrane segment at 267 to 289 threads the bilayer; that stretch reads VMVAKGCGQCLNFDCSFIAVLML. Topologically, residues 290–317 are cytoplasmic; it reads RRCLTWLRATWLAQVLPLDQNIQFHQLM. In terms of domain architecture, Ferric oxidoreductase spans 293–440; sequence LTWLRATWLA…FLEKAIGLAV (148 aa). A helical transmembrane segment spans residues 318–338; that stretch reads GYVVVGLSLVHTVAHTVNFVL. Residues 339–362 are Extracellular-facing; sequence QAQAEASPFQFWELLLTTRPGIGW. Residues 363-383 form a helical membrane-spanning segment; sequence VHGSASPTGVALLLLLLLMFI. Residues 384–394 are Cytoplasmic-facing; sequence CSSSCIRRSGH. The helical transmembrane segment at 395-417 threads the bilayer; the sequence is FEVFYWTHLSYLLVWLLLIFHGP. C-terminal catalytic dehydrogenase domain regions lie at residues 398 to 719 and 416 to 737; these read FYWT…GRPD and GPNF…KVQV. Topologically, residues 418–434 are extracellular; it reads NFWKWLLVPGILFFLEK. A helical membrane pass occupies residues 435–455; sequence AIGLAVSRMAAVCIMEVNLLP. The region spanning 441-577 is the FAD-binding FR-type domain; that stretch reads SRMAAVCIME…DGPYGTPTRR (137 aa). Over 456–583 the chain is Cytoplasmic; sequence SKVTHLLIKR…PTRRIFASEH (128 aa). Asp-475 carries the phosphoserine; by CaMK2 modification. A Phosphothreonine; by PKC/PRKCA modification is found at His-490. Position 494 is a phosphothreonine; by CaMK2 and PKC/PRKCA (Ile-494). A Phosphoserine; by CaMK2 and PKC/PRKCA modification is found at Pro-498. Position 502 is a phosphoserine; by CaMK2 (Asp-502). S-nitrosocysteine is present on Tyr-519. A helical transmembrane segment spans residues 584–604; the sequence is AVLIGAGIGITPFASILQSIM. Over 605–765 the chain is Extracellular; it reads YRHQKRKHTC…FGFRFFQENF (161 aa). At Asp-659 the chain carries Phosphoserine; by CaMK2. The residue at position 694 (Leu-694) is an S-nitrosocysteine.

In terms of assembly, homooligomer. Requires FAD as cofactor. Mg(2+) is required as a cofactor. Post-translationally, phosphorylation at Ser-475 by CaMK2 and at Ser-490, Thr-494 and Ser-498 by PKC/PRKCA positively regulates its catalytic activity. In terms of processing, S-nitrosylation in response to nitric oxide inhibits its catalytic activity. Mainly expressed in pachytene spermatocytes of testis and in lymphocyte-rich areas of spleen and lymph nodes. Also detected in ovary, placenta, pancreas, cardiac fibroblasts. Expressed in B-cells and prostate malignant cells. As to expression, expressed in spleen. Expressed in endothelial cells, pulmonary artery smooth muscle cells and epithelial colorectal adenocarcinoma cells. In terms of tissue distribution, expressed in microvascular endothelial cells (at protein level). Expressed in testis. Expressed in endothelial cells and pulmonary artery smooth muscle cells. Expressed in pulmonary artery smooth muscle cells and epithelial colorectal adenocarcinoma cells. As to expression, expressed in endothelial cells and pulmonary artery smooth muscle cells. In terms of tissue distribution, expressed in microvascular endothelial cells (at protein level).

Its subcellular location is the endoplasmic reticulum. The protein localises to the cell membrane. The enzyme catalyses NADPH + 2 O2 = 2 superoxide + NADP(+) + H(+). Its activity is regulated as follows. Activated by calcium which induces conformational changes and interaction between the N-terminal regulatory region and the C-terminal catalytic region. Inhibited by diphenylene iodonium. Calcium-dependent NADPH oxidase that catalyzes the generation of superoxide from molecular oxygen utilizing NADPH as an electron donor. May play a role in cell growth and apoptosis. In terms of biological role, calcium-dependent NADPH oxidase that catalyzes the generation of superoxide from molecular oxygen utilizing NADPH as an electron donor. Involved in endothelial generation of reactive oxygen species (ROS), proliferation and angiogenesis and contributes to endothelial response to thrombin. Regulates redox-dependent processes in lymphocytes and spermatozoa. Functionally, calcium-dependent NADPH oxidase that catalyzes the generation of superoxide from molecular oxygen utilizing NADPH as an electron donor. Its function is as follows. This isoform lacks calcium-binding domains and was showed to present a NADPH oxidase activity in a calcium-independent manner. May be involved in endothelial generation of reactive oxygen species (ROS), proliferation and angiogenesis and contribute to endothelial response to thrombin. However another study showed an absence of oxidase activity. Subject to rapid degradation. Lacks calcium-dependent NADPH oxidase activity. The protein is NADPH oxidase 5 of Homo sapiens (Human).